The following is a 138-amino-acid chain: Acidic phospholipase A2 RV-7 (138 aa).

Positions 1 to 16 are cleaved as a signal peptide; sequence MRTLWIVAVCLIGVEG. 7 disulfides stabilise this stretch: Cys-42/Cys-131, Cys-44/Cys-60, Cys-59/Cys-111, Cys-65/Cys-138, Cys-66/Cys-104, Cys-73/Cys-97, and Cys-91/Cys-102. Residues Tyr-43, Gly-45, and Gly-47 each coordinate Ca(2+). Residue His-63 is part of the active site. Position 64 (Asp-64) interacts with Ca(2+). The active site involves Asp-105.

It belongs to the phospholipase A2 family. Group II subfamily. D49 sub-subfamily. In terms of assembly, heterodimer of a weakly toxic basic protein having phospholipase A2 activity (RV-4) and a non-toxic acidic protein which inhibits its enzymatic activity but potentiates its lethal potency and neurotoxicity (RV-7). Requires Ca(2+) as cofactor. In terms of tissue distribution, expressed by the venom gland.

It localises to the secreted. The enzyme catalyses a 1,2-diacyl-sn-glycero-3-phosphocholine + H2O = a 1-acyl-sn-glycero-3-phosphocholine + a fatty acid + H(+). Its function is as follows. Heterodimer: RV-4/RV-7 targets the presynaptic sites of the neuromuscular junction. Monomer: snake venom phospholipase A2 (PLA2) RV-7 that has low enzymatic activity and is not toxic. It inhibits the enzymatic activity of RV-4 in vitro but potentiates its lethal potency and neurotoxicity. It may facilitate the specific binding of RV-4 to its presynaptic binding sites, probably by acting as a chaperone, minimizing distraction and destruction of RV-4 en route to the site of action by reducing non-specific binding to muscle and other organs. PLA2 catalyzes the calcium-dependent hydrolysis of the 2-acyl groups in 3-sn-phosphoglycerides. The polypeptide is Acidic phospholipase A2 RV-7 (Daboia siamensis (Eastern Russel's viper)).